The chain runs to 1013 residues: MKLLKPSWVNHNGKPIFSVDIHPDGTKFATGGQGQDSGKVVIWNMPPMLKEEDEKNENIPKMLCQMDNHLACVNCVRWSNNGAYLASGGDDKLIMVWKRSGYIGPSTVFGSSSKLANVEQWRCLSILRSHSGDVMDVAWSPHDAWLASCSVDNTVVIWNALKFPEIISTLRGHSGLVKGLTWDPVGKYIASQADDHSIKVWRTMDWQLETSITKPFDECGGTTHVLRLSWSPDGHYLVSAHAMNNSGPTAQIIERDGWKTNMDFVGHRKAVTVVKFNPKIFKKKQKNGSSTKTSCPYCCCAVGSKDRSLSVWLTCLKRPLVVIHELFDKSIMDISWTLNGLGILVCSMDGSVAYLDFSQDELGDPLSEEEKNNIHQSTYGKSLAITTEPQLPNTVIENPEMLKFQQRQQLQQDGEHMVQAQMEAPIHNMASMMNGESLEDIRKNLLKKQVETRTADGRRRITPLCIAQLDTGDFSTAFFNSIPISGSLPGSMMSSQSNQQLISLDSNTTSSSGALKSNVELVGNNTKPAEETANKESGNVSSSSPVAPTSITAQPKIEPMKALDSRFTERSKATSGTAGVAHLNQTAVDRLKEQNVTKDSKPRVVESSSDSEEKIPASKQLSKRKGEADADLAEKRKKGRPRKESQRLMSVSLTVQSQVASTSEKELTCVTTSSLTLRLPTPTPQKSFTLQLSSDPSMYIEVENEVKTVGGNKLSQLKCHREGKEWEAVLTSRIVAAAGSKEVVCVACEKRMLSIFSGSGRRIFPPIILPSPISTLQCTGSYVMALTAAAALSVWDVQNQNIIIKNESLQPLLSGNDLTVSQTLLTKRGIPVLSLSNGKAYCFSPSLSTWSLVSDKQDSLAQCADYRSCMPSQDAVMCSGPLAIIQGRVSNAGRQAAHLFTMPHLVQKETTMAYLENQVAAALMLQSSQEYRHWLLIYAQYLVNEGFEQRLREVCQDLLGPVHRSSDSQWESRILGLWKRELLKELLPLIGQNLRFQRLFTEYQEQLDILRDK.

WD repeat units lie at residues 11–53 (HNGK…KEED), 68–107 (NHLACVNCVRWSNNGAYLASGGDDKLIMVWKRSGYIGPST), 129–168 (SHSGDVMDVAWSPHDAWLASCSVDNTVVIWNALKFPEIIS), 172–211 (GHSGLVKGLTWDPVGKYIASQADDHSIKVWRTMDWQLETS), 220–263 (GGTT…TNMD), 266–322 (GHRK…PLVV), and 326–367 (LFDK…DPLS). Residues 529–648 (AEETANKESG…GRPRKESQRL (120 aa)) form a disordered region. Residues 535-553 (KESGNVSSSSPVAPTSITA) are compositionally biased toward polar residues. Over residues 558–572 (EPMKALDSRFTERSK) the composition is skewed to basic and acidic residues. Polar residues predominate over residues 573-587 (ATSGTAGVAHLNQTA). Composition is skewed to basic and acidic residues over residues 589–604 (DRLKEQNVTKDSKPRV) and 624–634 (RKGEADADLAE).

This sequence belongs to the WD repeat HIR1 family. As to quaternary structure, interacts with histone H2A, histone H2B, histone H3 and histone H4.

The protein localises to the nucleus. Functionally, required for the periodic repression of histone gene transcription during the cell cycle. Required for replication-independent chromatin assembly. The polypeptide is Protein HIRA (hira) (Xenopus laevis (African clawed frog)).